Reading from the N-terminus, the 66-residue chain is Truncated interferon antagonist OPG039 (66 aa).

The stretch at 29–58 (HGHSALYYAIADNNMRLVCTLLNAGALKNL) is one ANK repeat.

The protein belongs to the orthopoxvirus OPG039 family.

This is Truncated interferon antagonist OPG039 (OPG040) from Homo sapiens (Human).